Reading from the N-terminus, the 360-residue chain is Variable large protein 18 (360 aa).

The first 26 residues, 1 to 26, serve as a signal peptide directing secretion; sequence MRKRISAIINKLNISIMMMIVVLMIG. A lipid anchor (N-palmitoyl cysteine) is attached at Cys-27. A lipid anchor (S-diacylglycerol cysteine) is attached at Cys-27.

Belongs to the variable large protein (Vlp) family. Alpha subfamily.

It localises to the cell outer membrane. Functionally, the Vlp and Vsp proteins are antigenically distinct proteins, only one vlp or vsp gene is transcriptionally active at any one time. Switching between these genes is a mechanism of host immune response evasion. This Borrelia hermsii protein is Variable large protein 18.